A 76-amino-acid polypeptide reads, in one-letter code: Envelope small membrane protein (76 aa).

Topologically, residues 1-14 (MLQLVNDNGVVVNA) are virion surface. Residues 15–35 (ILWLFVLFFVLVISITFVQLI) form a helical membrane-spanning segment. Residues 36 to 76 (NLCFTCHRLCNNVVYKPVGKVYGVYKSYMRIQPLTSDIIQV) lie on the Intravirion side of the membrane.

Belongs to the alphacoronaviruses E protein family. In terms of assembly, homopentamer. Interacts with membrane protein M in the budding compartment of the host cell, which is located between endoplasmic reticulum and the Golgi complex. Interacts with Nucleoprotein.

It localises to the host Golgi apparatus membrane. Its function is as follows. Plays a central role in virus morphogenesis and assembly. Acts as a viroporin and self-assembles in host membranes forming pentameric protein-lipid pores that allow ion transport. Also plays a role in the induction of apoptosis. This chain is Envelope small membrane protein, found in Scotophilus kuhlii (Lesser asiatic yellow bat).